Here is a 131-residue protein sequence, read N- to C-terminus: MKILYAYRFQNNEYDIIEFLNKFKELNPDENFKEIDEEYLKKLLTGVIRNQQLIDNLIEKYSKDWPLSRIPMVELELMRIAIYELLFEEEIPISVAIDEAVDLSSIFGVEKAPSFVNGILGSIAVNEVKRE.

The protein belongs to the NusB family.

Functionally, involved in transcription antitermination. Required for transcription of ribosomal RNA (rRNA) genes. Binds specifically to the boxA antiterminator sequence of the ribosomal RNA (rrn) operons. This is Transcription antitermination protein NusB from Caldicellulosiruptor saccharolyticus (strain ATCC 43494 / DSM 8903 / Tp8T 6331).